The primary structure comprises 320 residues: Lipoyl synthase (320 aa).

The interval 1–28 is disordered; that stretch reads MVTVVDRVTDRRLRHPEKAHRPDTSVQK. Residues 19 to 28 are compositionally biased toward basic and acidic residues; sequence AHRPDTSVQK. The [4Fe-4S] cluster site is built by cysteine 59, cysteine 64, cysteine 70, cysteine 85, cysteine 89, cysteine 92, and serine 298. The Radical SAM core domain maps to 71 to 287; that stretch reads WSQRHASFMI…AKIGKVKGFL (217 aa).

The protein belongs to the radical SAM superfamily. Lipoyl synthase family. It depends on [4Fe-4S] cluster as a cofactor.

It is found in the cytoplasm. The enzyme catalyses [[Fe-S] cluster scaffold protein carrying a second [4Fe-4S](2+) cluster] + N(6)-octanoyl-L-lysyl-[protein] + 2 oxidized [2Fe-2S]-[ferredoxin] + 2 S-adenosyl-L-methionine + 4 H(+) = [[Fe-S] cluster scaffold protein] + N(6)-[(R)-dihydrolipoyl]-L-lysyl-[protein] + 4 Fe(3+) + 2 hydrogen sulfide + 2 5'-deoxyadenosine + 2 L-methionine + 2 reduced [2Fe-2S]-[ferredoxin]. The protein operates within protein modification; protein lipoylation via endogenous pathway; protein N(6)-(lipoyl)lysine from octanoyl-[acyl-carrier-protein]: step 2/2. Functionally, catalyzes the radical-mediated insertion of two sulfur atoms into the C-6 and C-8 positions of the octanoyl moiety bound to the lipoyl domains of lipoate-dependent enzymes, thereby converting the octanoylated domains into lipoylated derivatives. This chain is Lipoyl synthase, found in Bartonella henselae (strain ATCC 49882 / DSM 28221 / CCUG 30454 / Houston 1) (Rochalimaea henselae).